Consider the following 393-residue polypeptide: Cysteine protease ATG4B (393 aa).

An N-acetylmethionine modification is found at Met1. Ser34 bears the Phosphoserine; by PKB/AKT1 and PKB/AKT2 mark. The active-site Nucleophile is Cys74. Residue Cys189 is modified to S-nitrosocysteine. Catalysis depends on residues Asp278 and His280. An S-nitrosocysteine mark is found at Cys292 and Cys301. Residues Cys292 and Cys361 are joined by a disulfide bond. Ser316 bears the Phosphoserine; by ULK1 mark. At Ser383 the chain carries Phosphoserine; by STK26. An LIR motif is present at residues 388-391 (FEIL). Position 392 is a phosphoserine (Ser392).

Belongs to the peptidase C54 family. In terms of assembly, interacts with PFKP; promoting phosphorylation of ATG4B at Ser-34. Interacts with GBP7. Phosphorylation at Ser-383 and Ser-392 promotes autophagy by increasing protein delipidation activity without affecting proteolytic activation of ATG8 proteins. Phosphorylation at Ser-316 by ULK1 inhibits autophagy by decreasing both proteolytic activation and delipidation activities. Phosphorylation at Ser-316 is dephosphorylated by protein phosphatase 2A (PP2A). Phosphorylation at Ser-34 by AKT2 promotes its hydrolase activity, leading to increased proteolytic activation and delipidation of ATG8 family proteins. Phosphorylation at Ser-34 by AKT1 promotes mitochondrial localization and inhibition of the F1F0-ATP synthase activity, leading to elevation of mitochondrial reactive oxygen species (ROS). Post-translationally, ubiquitinated by RNF5, leading to its degradation by the proteasome. In terms of processing, S-nitrosylation at Cys-189 and Cys-292 in response to high glucose decreases both proteolytic activation and delipidation activities. O-glycosylated by OGT, leading to increase protease activity, thereby promoting the proteolytic activation of ATG8 family proteins. Post-translationally, forms reversible intrachain disulfide bonds in response to oxidative stress. Forms interchain disulfide bonds, leading to formation of homooligomers in response to oxidation.

The protein localises to the cytoplasm. It localises to the cytosol. Its subcellular location is the cytoplasmic vesicle. It is found in the autophagosome. The protein resides in the endoplasmic reticulum. The protein localises to the mitochondrion. It catalyses the reaction [protein]-C-terminal L-amino acid-glycyl-phosphatidylethanolamide + H2O = [protein]-C-terminal L-amino acid-glycine + a 1,2-diacyl-sn-glycero-3-phosphoethanolamine. The enzyme catalyses [protein]-C-terminal L-amino acid-glycyl-phosphatidylserine + H2O = [protein]-C-terminal L-amino acid-glycine + a 1,2-diacyl-sn-glycero-3-phospho-L-serine. Its activity is regulated as follows. Inhibited by N-ethylmaleimide. Redox-regulated during autophagy since reducing conditions activate ATG4A whereas an oxidizing environment such as the presence of H(2)O(2) inhibits its activity. The cysteine protease activity compounds is inhibited by styrylquinoline compounds 4-28 and LV-320. In terms of biological role, cysteine protease that plays a key role in autophagy by mediating both proteolytic activation and delipidation of ATG8 family proteins. Required for canonical autophagy (macroautophagy), non-canonical autophagy as well as for mitophagy. The protease activity is required for proteolytic activation of ATG8 family proteins: cleaves the C-terminal amino acid of ATG8 proteins MAP1LC3A, MAP1LC3B, MAP1LC3C, GABARAPL1, GABARAPL2 and GABARAP, to reveal a C-terminal glycine. Exposure of the glycine at the C-terminus is essential for ATG8 proteins conjugation to phosphatidylethanolamine (PE) and insertion to membranes, which is necessary for autophagy. Protease activity is also required to counteract formation of high-molecular weight conjugates of ATG8 proteins (ATG8ylation): acts as a deubiquitinating-like enzyme that removes ATG8 conjugated to other proteins, such as ATG3. In addition to the protease activity, also mediates delipidation of ATG8 family proteins. Catalyzes delipidation of PE-conjugated forms of ATG8 proteins during macroautophagy. Also involved in non-canonical autophagy, a parallel pathway involving conjugation of ATG8 proteins to single membranes at endolysosomal compartments, by catalyzing delipidation of ATG8 proteins conjugated to phosphatidylserine (PS). Compared to other members of the family (ATG4A, ATG4C or ATG4C), constitutes the major protein for proteolytic activation of ATG8 proteins, while it displays weaker delipidation activity than other ATG4 paralogs. Involved in phagophore growth during mitophagy independently of its protease activity and of ATG8 proteins: acts by regulating ATG9A trafficking to mitochondria and promoting phagophore-endoplasmic reticulum contacts during the lipid transfer phase of mitophagy. This Homo sapiens (Human) protein is Cysteine protease ATG4B.